Reading from the N-terminus, the 486-residue chain is MTTFYTVLSWLTFFFYWLLIAGVTFRVLMHRRPVTSTMTWLLIIYILPLVGVIAYFAFGELHLGKRRVEHARQMWPSVVAWLEELKKCKHIFAKHYSDVAEPIFQLTAKRQGINGVKGNKIQLLTTCEDSLNAITRDINNARDNIEMVFYIWQSGGLVEEVTEALIQAAKRGVKCRIMVDSAGSRSFFRTNGPARMRAAGIEFVESLQVNLFRFFLRRMDLRQHRKIVLIDNYISYTGSMNMVDPRYFKQDAGVGQWIDIMVRMEGPVSTTLGIIYAFDWEMETGERHLPPPPDNNIMPFEQANGHTTQVIASGPGFPEELIQQSLITAIYSARKELVMTTPYFVPSDDLAHAISTAAMRGVDVSIIVPRSNDSFLVRWASRAFFTEILEAGVKVFQFEDGLLHTKSVMVDGQLSMVGSVNLDMRSLWLNFEITVVIDDECFASDLSIVQYDYIARSTQLTLDEWEKRPFMNRVLERLCYFFSPLL.

Transmembrane regions (helical) follow at residues 3–23 and 38–58; these read TFYTVLSWLTFFFYWLLIAGV and MTWLLIIYILPLVGVIAYFAF. PLD phosphodiesterase domains lie at 219–246 and 399–426; these read MDLRQHRKIVLIDNYISYTGSMNMVDPR and EDGLLHTKSVMVDGQLSMVGSVNLDMRS. Catalysis depends on residues His-224, Lys-226, Asp-231, His-404, Lys-406, and Asp-411.

This sequence belongs to the phospholipase D family. Cardiolipin synthase subfamily. ClsA sub-subfamily.

It localises to the cell inner membrane. It catalyses the reaction 2 a 1,2-diacyl-sn-glycero-3-phospho-(1'-sn-glycerol) = a cardiolipin + glycerol. Its function is as follows. Catalyzes the reversible phosphatidyl group transfer from one phosphatidylglycerol molecule to another to form cardiolipin (CL) (diphosphatidylglycerol) and glycerol. This is Cardiolipin synthase A from Proteus mirabilis (strain HI4320).